The following is a 394-amino-acid chain: Acid ceramidase (394 aa).

An N-terminal signal peptide occupies residues Met1 to Ala20. Cys30 and Cys339 are joined by a disulfide. The active-site Nucleophile is Cys142. N-linked (GlcNAc...) asparagine glycosylation is found at Asn194, Asn258, Asn285, and Asn341. Cys387 and Cys391 are oxidised to a cystine.

This sequence belongs to the acid ceramidase family. As to quaternary structure, heterodimer; disulfide-linked. The heterodimer is composed of the disulfide-linked alpha and beta chains produced by autocatalytic cleavage of the precursor. N-glycosylated. In terms of processing, proteolytically cleaved into two chains alpha and beta that remain associated via a disulfide bond. Cleavage gives rise to a conformation change that activates the enzyme. The same catalytic Cys residue mediates the autoproteolytic cleavage and subsequent hydrolysis of lipid substrates. The beta chain may undergo an additional C-terminal processing.

The protein resides in the lysosome. It is found in the secreted. The catalysed reaction is an N-acylsphing-4-enine + H2O = sphing-4-enine + a fatty acid. It catalyses the reaction N-dodecanoylsphing-4-enine + H2O = dodecanoate + sphing-4-enine. The enzyme catalyses N-tetradecanoylsphing-4-enine + H2O = tetradecanoate + sphing-4-enine. It carries out the reaction N-hexadecanoylsphing-4-enine + H2O = sphing-4-enine + hexadecanoate. The catalysed reaction is N-octadecanoylsphing-4-enine + H2O = sphing-4-enine + octadecanoate. It catalyses the reaction N-dodecanoyl-(4R)-hydroxysphinganine + H2O = (4R)-hydroxysphinganine + dodecanoate. The enzyme catalyses N-(dodecanoyl)-sphinganine + H2O = dodecanoate + sphinganine. It carries out the reaction N-(acetyl)-sphing-4-enine + H2O = sphing-4-enine + acetate. The catalysed reaction is N-(hexanoyl)sphing-4-enine + H2O = hexanoate + sphing-4-enine. It catalyses the reaction N-octanoylsphing-4-enine + H2O = octanoate + sphing-4-enine. The enzyme catalyses N-(9Z-octadecenoyl)-sphing-4-enine + H2O = sphing-4-enine + (9Z)-octadecenoate. It carries out the reaction N-dodecanoylethanolamine + H2O = dodecanoate + ethanolamine. The protein operates within lipid metabolism; sphingolipid metabolism. In terms of biological role, lysosomal ceramidase that hydrolyzes sphingolipid ceramides into sphingosine and free fatty acids at acidic pH. Ceramides, sphingosine, and its phosphorylated form sphingosine-1-phosphate are bioactive lipids that mediate cellular signaling pathways regulating several biological processes including cell proliferation, apoptosis and differentiation. Has a higher catalytic efficiency towards C12-ceramides versus other ceramides. Also catalyzes the reverse reaction allowing the synthesis of ceramides from fatty acids and sphingosine. For the reverse synthetic reaction, the natural sphingosine D-erythro isomer is more efficiently utilized as a substrate compared to D-erythro-dihydrosphingosine and D-erythro-phytosphingosine, while the fatty acids with chain lengths of 12 or 14 carbons are the most efficiently used. Also has an N-acylethanolamine hydrolase activity. By regulating the levels of ceramides, sphingosine and sphingosine-1-phosphate in the epidermis, mediates the calcium-induced differentiation of epidermal keratinocytes. Also indirectly regulates tumor necrosis factor/TNF-induced apoptosis. By regulating the intracellular balance between ceramides and sphingosine, in adrenocortical cells, probably also acts as a regulator of steroidogenesis. This Rattus norvegicus (Rat) protein is Acid ceramidase.